The chain runs to 467 residues: MRLPREIGPIHFVGIGGIGMSGIAEVLCNLGYTVQGSDASEGANVVRLREKGVKVTVGHKAGNVNGADVLVVSTAIKRDNPELMAARAQRIPVVRRAEMLAELMRLKSCVAIAGTHGKTTTTSMVATLLDAGDFDPTVINGGIINAYGTNARLGAGEWMVVEADESDGTFLKLPTDVAIVTNVDAEHLDHFKTFDAVQDAFRSFVENVPFYGFAVMCIDHPVVQAMVGRIEDRRIITYGQNPQADVRLVDLAPNGGGSHFKVMFRNRKTDAAHEISDLVLPMPGPHNALNATAAIAVAHELGITDATIRKALAAFGGVKRRFTRTGEWNGVTVIDDYGHHPVEIAAVLKAARESTDGRVIAVVQPHRYTRLQALFEEFCTCFNDADTVVVADVYPAGETPIVGIDRDHFVLGLRAHGHREVVPLPESAALAGIIADLAKQGDYVVCLGAGNITQWAYALPGELKALG.

114–120 (GTHGKTT) contributes to the ATP binding site.

Belongs to the MurCDEF family.

The protein resides in the cytoplasm. It carries out the reaction UDP-N-acetyl-alpha-D-muramate + L-alanine + ATP = UDP-N-acetyl-alpha-D-muramoyl-L-alanine + ADP + phosphate + H(+). Its pathway is cell wall biogenesis; peptidoglycan biosynthesis. Functionally, cell wall formation. The chain is UDP-N-acetylmuramate--L-alanine ligase from Nitrobacter winogradskyi (strain ATCC 25391 / DSM 10237 / CIP 104748 / NCIMB 11846 / Nb-255).